A 254-amino-acid chain; its full sequence is Imidazole glycerol phosphate synthase subunit HisF (254 aa).

Residues D11 and D130 contribute to the active site.

The protein belongs to the HisA/HisF family. In terms of assembly, heterodimer of HisH and HisF.

Its subcellular location is the cytoplasm. It catalyses the reaction 5-[(5-phospho-1-deoxy-D-ribulos-1-ylimino)methylamino]-1-(5-phospho-beta-D-ribosyl)imidazole-4-carboxamide + L-glutamine = D-erythro-1-(imidazol-4-yl)glycerol 3-phosphate + 5-amino-1-(5-phospho-beta-D-ribosyl)imidazole-4-carboxamide + L-glutamate + H(+). Its pathway is amino-acid biosynthesis; L-histidine biosynthesis; L-histidine from 5-phospho-alpha-D-ribose 1-diphosphate: step 5/9. IGPS catalyzes the conversion of PRFAR and glutamine to IGP, AICAR and glutamate. The HisF subunit catalyzes the cyclization activity that produces IGP and AICAR from PRFAR using the ammonia provided by the HisH subunit. The chain is Imidazole glycerol phosphate synthase subunit HisF from Staphylococcus carnosus (strain TM300).